A 96-amino-acid polypeptide reads, in one-letter code: Protein Vpr (96 aa).

The segment at 1 to 42 (MEQAPADQGPQREPYNEWALELLEELKSEAVRHFPRIWLHSL) is homooligomerization. Phosphoserine; by host is present on residues serine 79, serine 94, and serine 96.

The protein belongs to the HIV-1 VPR protein family. In terms of assembly, homooligomer, may form homodimer. Interacts with p6-gag region of the Pr55 Gag precursor protein through a (Leu-X-X)4 motif near the C-terminus of the P6gag protein. Interacts with host UNG. May interact with host RAD23A/HHR23A. Interacts with host VPRBP/DCAF1, leading to hijack the CUL4A-RBX1-DDB1-DCAF1/VPRBP complex, mediating ubiquitination of host proteins such as TERT and ZGPAT and arrest of the cell cycle in G2 phase. Phosphorylated on several residues by host. These phosphorylations regulate VPR activity for the nuclear import of the HIV-1 pre-integration complex.

Its subcellular location is the virion. The protein localises to the host nucleus. The protein resides in the host extracellular space. During virus replication, may deplete host UNG protein, and incude G2-M cell cycle arrest. Acts by targeting specific host proteins for degradation by the 26S proteasome, through association with the cellular CUL4A-DDB1 E3 ligase complex by direct interaction with host VPRPB/DCAF-1. Cell cycle arrest reportedly occurs within hours of infection and is not blocked by antiviral agents, suggesting that it is initiated by the VPR carried into the virion. Additionally, VPR induces apoptosis in a cell cycle dependent manner suggesting that these two effects are mechanistically linked. Detected in the serum and cerebrospinal fluid of AIDS patient, VPR may also induce cell death to bystander cells. Its function is as follows. During virus entry, plays a role in the transport of the viral pre-integration (PIC) complex to the host nucleus. This function is crucial for viral infection of non-dividing macrophages. May act directly at the nuclear pore complex, by binding nucleoporins phenylalanine-glycine (FG)-repeat regions. The chain is Protein Vpr from Human immunodeficiency virus type 1 group M subtype D (isolate ELI) (HIV-1).